A 325-amino-acid polypeptide reads, in one-letter code: Formimidoylglutamase (325 aa).

Residues histidine 130, aspartate 156, histidine 158, aspartate 160, cysteine 244, and aspartate 246 each coordinate Mn(2+).

It belongs to the arginase family. Requires Mn(2+) as cofactor.

It catalyses the reaction N-formimidoyl-L-glutamate + H2O = formamide + L-glutamate. It participates in amino-acid degradation; L-histidine degradation into L-glutamate; L-glutamate from N-formimidoyl-L-glutamate (hydrolase route): step 1/1. Its function is as follows. Catalyzes the conversion of N-formimidoyl-L-glutamate to L-glutamate and formamide. The polypeptide is Formimidoylglutamase (Geobacillus sp. (strain WCH70)).